A 504-amino-acid polypeptide reads, in one-letter code: Cytochrome P450 3A16 (504 aa).

Cys443 is a heme binding site.

This sequence belongs to the cytochrome P450 family. The cofactor is heme.

It localises to the endoplasmic reticulum membrane. The protein resides in the microsome membrane. The enzyme catalyses an organic molecule + reduced [NADPH--hemoprotein reductase] + O2 = an alcohol + oxidized [NADPH--hemoprotein reductase] + H2O + H(+). Its function is as follows. Cytochromes P450 are a group of heme-thiolate monooxygenases. In liver microsomes, this enzyme is involved in an NADPH-dependent electron transport pathway. It oxidizes a variety of structurally unrelated compounds, including steroids, fatty acids, and xenobiotics. The sequence is that of Cytochrome P450 3A16 (Cyp3a16) from Mus musculus (Mouse).